An 817-amino-acid chain; its full sequence is Exocyst complex component 6 (817 aa).

Coiled-coil stretches lie at residues 87–149 (QSFV…DQIA) and 247–270 (TDAERAKKIQEEARKNASNVEIEV).

Belongs to the SEC15 family. The exocyst complex is composed of sec-3/exoc1, sec-5/exoc2, sec-6/exoc3, sec-8/exoc4, sec-10/exoc5, sec-15/exoc6, exo-70/exoc7 and exo-84/exoc8.

Functionally, component of the exocyst complex involved in the docking of exocytic vesicles with fusion sites on the plasma membrane. The chain is Exocyst complex component 6 (sec-15) from Caenorhabditis elegans.